A 972-amino-acid polypeptide reads, in one-letter code: MSGDVAAENSIHIQNGGSCEVVQSNGVTTNGHGHHHHHHSSSSSSSKHKSSSKDKHRDREREHKSSNSSSSSKEHKSSSRDKDRHKSSSSSSKHRDKDKERDGSSNSHRSGSSSSHKDKDGSSSSKHKSSSGHHKRSSKDKERRDKDKDRGSSSSSRHKSSSSSRDKERSSSSHKSSSSSSSSKSKHSSSRHSSSSSSKDHPSYDGVFVKPEPVSQQLMHSGSVDAFQMQQLGSYEAAAAGTNFNGNGNVAGANYKNGYEESIVDIKKEEESFNNLSQASSCDYSMSQFRADEPPFVVKHEQSYAEEDSTMNYNDHDDDADEMNDDEEDVPLAMRKRKQEATDRPDGGMDNDDDDDIPLLARKKVKKEKIKKESKEKSKKRVKEEPSDDYGNVKPKKKKMKKEPEPAVSPGKRQKAKAKVEEEEVWRWWEEEKRADGVKWSTLEHKGPVFAPRYERVPRNVRFYYDGKPLELSEETEEAATFYAKMLNHDYCTKEVFNNNFFKDFRKSMTPREREIIKDFRKCNFQEMFNYFQAESEKRKAASKEEKLIKKNENEALMKEFGFCMIDGHKEKIGNFRLEPPGLFRGRGEHPKMGMIKRRIQASDVSINCGKDSKVPSPPPGSRWKEVRHDNTVTWLASWIENVQGQVKYIMLNPSSKLKGEKDHIKYETARRLDKVIDKIRATYRDEWKSKEMRVRQRAVALYFIDKLALRAGNEKDEDQADTVGCCSLRVEHVQLHKELNGKENVVVFDFPGKDSIRYYNEVEVEKRVFKNLELFMEHKKEGDDLFDRLNTQVLNEHLKELMEGLTAKVFRTYNASKTLQSQLDLLTDPSATVPEKLLAYNRANRAVAILCNHQRSVPKSHEKSMENLKEKIKAKREAIEKCESEYHSRDEKKGKQLERLRDQLKKLELQETDRDENKTIALGTSKLNYLDPRISVAWCKKHDVPIEKIFNKTQRTKFLWAVHMADENYRF.

Disordered regions lie at residues 1–210 (MSGD…VFVK) and 300–416 (HEQS…RQKA). Residues 11–31 (IHIQNGGSCEVVQSNGVTTNG) show a composition bias toward polar residues. Residues 32-50 (HGHHHHHHSSSSSSSKHKS) are compositionally biased toward basic residues. Composition is skewed to basic and acidic residues over residues 51–65 (SSKDKHRDREREHKS), 72–86 (SKEHKSSSRDKDRHK), and 93–103 (KHRDKDKERDG). Low complexity predominate over residues 104–114 (SSNSHRSGSSS). Basic residues predominate over residues 125–138 (SKHKSSSGHHKRSS). Over residues 139–151 (KDKERRDKDKDRG) the composition is skewed to basic and acidic residues. The segment covering 173–183 (SHKSSSSSSSS) has biased composition (low complexity). The residue at position 303 (Ser303) is a Phosphoserine. Tyr304 is modified (phosphotyrosine). Residues 316–330 (HDDDADEMNDDEEDV) show a composition bias toward acidic residues. 3 interaction with DNA regions span residues 648–649 (KY), 711–716 (RAGNEK), and 807–809 (TAK). A Topo IB-type catalytic domain is found at 655 to 972 (SSKLKGEKDH…VHMADENYRF (318 aa)). Residue Tyr930 is the O-(3'-phospho-DNA)-tyrosine intermediate of the active site.

This sequence belongs to the type IB topoisomerase family. As to quaternary structure, interacts with Topors.

The protein localises to the nucleus. Its subcellular location is the cytoplasm. The catalysed reaction is ATP-independent breakage of single-stranded DNA, followed by passage and rejoining.. Functionally, releases the supercoiling and torsional tension of DNA introduced during the DNA replication and transcription by transiently cleaving and rejoining one strand of the DNA duplex. Introduces a single-strand break via transesterification at a target site in duplex DNA. The scissile phosphodiester is attacked by the catalytic tyrosine of the enzyme, resulting in the formation of a DNA-(3'-phosphotyrosyl)-enzyme intermediate and the expulsion of a 5'-OH DNA strand. The free DNA strand then undergoes passage around the unbroken strand thus removing DNA supercoils. Finally, in the religation step, the DNA 5'-OH attacks the covalent intermediate to expel the active-site tyrosine and restore the DNA phosphodiester backbone. The polypeptide is DNA topoisomerase 1 (Drosophila melanogaster (Fruit fly)).